A 56-amino-acid polypeptide reads, in one-letter code: Aspartyl-phosphate phosphatase YisI (56 aa).

It belongs to the spo0E family.

In terms of biological role, aspartyl-phosphate phosphatase which specifically dephosphorylates the sporulation transcription factor Spo0A-P and negatively regulates the sporulation initiation pathway in order to control the proper timing of sporulation. The protein is Aspartyl-phosphate phosphatase YisI (yisI) of Bacillus subtilis (strain 168).